Consider the following 1059-residue polypeptide: Dihydropyrimidine dehydrogenase [NADP(+)] (1059 aa).

A 4Fe-4S ferredoxin-type 1 domain is found at 84-118; sequence ERGALKEAMRCLKCADAPCQKSCPTQLDVKSFITS. [4Fe-4S] cluster-binding residues include cysteine 94, cysteine 97, cysteine 102, cysteine 106, cysteine 145, cysteine 151, cysteine 155, and glutamine 171. Residues 207-211, 231-239, arginine 248, and leucine 274 contribute to the FAD site; these read GCGPA and EKRAYIGGL. NADP(+) contacts are provided by residues 354–357, 378–379, arginine 385, 451–453, and 495–501; these read AGDT, RK, AFG, and DVAGVAE. 494 to 503 contacts FAD; sequence GDVAGVAETT. FMN contacts are provided by residues serine 564 and 588–589; that span reads KT. Substrate is bound by residues asparagine 623 and 682–684; that span reads NLS. Residue cysteine 685 is the Proton acceptor of the active site. An FMN-binding site is contributed by lysine 723. 750-751 lines the substrate pocket; that stretch reads NT. Residues glycine 781, 807 to 809, and 830 to 831 each bind FMN; these read TGG and CS. 4Fe-4S ferredoxin-type domains lie at 955-987 and 989-1019; these read KVAI…FDPV and HQPH…MVPR. [4Fe-4S] cluster contacts are provided by cysteine 964, cysteine 967, cysteine 970, cysteine 974, cysteine 998, cysteine 1001, cysteine 1004, and cysteine 1008.

Belongs to the dihydropyrimidine dehydrogenase family. The cofactor is [4Fe-4S] cluster. It depends on FAD as a cofactor. FMN serves as cofactor.

The enzyme catalyses 5,6-dihydrouracil + NADP(+) = uracil + NADPH + H(+). It functions in the pathway amino-acid biosynthesis; beta-alanine biosynthesis. Involved in pyrimidine base degradation. Catalyzes the reduction of uracil and thymine. Involved in the degradation of the chemotherapeutic drug 5-fluorouracil. This is Dihydropyrimidine dehydrogenase [NADP(+)] (dpyd-1) from Caenorhabditis elegans.